The primary structure comprises 317 residues: Ubiquinone biosynthesis protein COQ9-A, mitochondrial (317 aa).

The N-terminal 46 residues, 1-46 (MAASVTRVLKGAGGRQLLLMVARRRPVLMQPFLLMPRKFWVSSALR), are a transit peptide targeting the mitochondrion. Positions 50–97 (QRQPPFSASSTHAETQGHAEEQYQQKQPPPRYTDQAGEESEGYESEEQ) are disordered. Residues 53-63 (PPFSASSTHAE) are compositionally biased toward polar residues. Residues 85-96 (AGEESEGYESEE) are compositionally biased toward acidic residues. R243 contacts a 1,2-diacylglycero-3-phosphoethanolamine.

Belongs to the COQ9 family. As to quaternary structure, homodimer. Heterodimer; two heterodimers of COQ7:COQ9 come together on the same side of the lipid pseudo-bilayer and form a curved tetramer with a hydrophobic surface suitable for membrane interaction. These two tetramers assemble into a soluble octamer with a pseudo-bilayer of lipids captured within. Interacts with COQ7; this interaction allows ubiquinone (CoQ) isoprene intermediates presentation to COQ7 and facilitates the COQ7-mediated hydroxylase step.

It localises to the mitochondrion. The protein operates within cofactor biosynthesis; ubiquinone biosynthesis. Functionally, membrane-associated protein that warps the membrane surface to access and bind aromatic isoprenes with high specificity, including ubiquinone (CoQ) isoprene intermediates and presents them directly to COQ7, therefore facilitating the COQ7-mediated hydroxylase step. Participates in the biosynthesis of coenzyme Q, also named ubiquinone, an essential lipid-soluble electron transporter for aerobic cellular respiration. The polypeptide is Ubiquinone biosynthesis protein COQ9-A, mitochondrial (coq9-a) (Xenopus laevis (African clawed frog)).